A 55-amino-acid polypeptide reads, in one-letter code: Neurotoxin B-II (55 aa).

Position 10 is a hydroxyproline (P10). 4 disulfides stabilise this stretch: C12–C48, C16–C52, C23–C41, and C26–C37.

Belongs to the worm B-toxin family.

Its subcellular location is the secreted. Functionally, this toxin increases the excitability of nerves by delaying the inactivation of the voltage-gated sodium channel (Nav). Only acts on some crustacean. Neurotoxin B-II is less abundant, but 15-fold more toxic than neurotoxin B-VI. This is Neurotoxin B-II from Cerebratulus lacteus (Milky ribbon worm).